The following is a 117-amino-acid chain: Ribosome-binding factor A (117 aa).

The protein belongs to the RbfA family. In terms of assembly, monomer. Binds 30S ribosomal subunits, but not 50S ribosomal subunits or 70S ribosomes.

The protein resides in the cytoplasm. In terms of biological role, one of several proteins that assist in the late maturation steps of the functional core of the 30S ribosomal subunit. Associates with free 30S ribosomal subunits (but not with 30S subunits that are part of 70S ribosomes or polysomes). Required for efficient processing of 16S rRNA. May interact with the 5'-terminal helix region of 16S rRNA. The sequence is that of Ribosome-binding factor A from Blochmanniella floridana.